The chain runs to 493 residues: Transcript termination protein A18 (493 aa).

The region spanning 100 to 256 is the Helicase ATP-binding domain; that stretch reads MIELKRPLYI…NSIINIAKLS (157 aa). Position 113-120 (113-120) interacts with ATP; that stretch reads LACGFGKT. The DESH box motif lies at 206-209; that stretch reads DESH.

This sequence belongs to the helicase family. Poxviruses subfamily. As to quaternary structure, interacts with G2. Might be part of a transcription complex composed at least of G2, A18, and H5.

It localises to the virion. Its function is as follows. DNA helicase which seems to act as a postreplicative transcription termination factor. Involved in ATP-dependent release of nascent RNA. Forms a stable complex with single-stranded DNA, and to a lesser extent RNA. The chain is Transcript termination protein A18 from Camelus.